Reading from the N-terminus, the 650-residue chain is Phosphomethylpyrimidine synthase (650 aa).

Residues Asn-241, Met-270, Tyr-299, His-335, 355–357 (SRG), 396–399 (DGLR), and Glu-435 contribute to the substrate site. His-439 contacts Zn(2+). Position 462 (Tyr-462) interacts with substrate. His-503 is a binding site for Zn(2+). Cys-583, Cys-586, and Cys-591 together coordinate [4Fe-4S] cluster.

Belongs to the ThiC family. In terms of assembly, homodimer. Requires [4Fe-4S] cluster as cofactor.

The enzyme catalyses 5-amino-1-(5-phospho-beta-D-ribosyl)imidazole + S-adenosyl-L-methionine = 4-amino-2-methyl-5-(phosphooxymethyl)pyrimidine + CO + 5'-deoxyadenosine + formate + L-methionine + 3 H(+). It participates in cofactor biosynthesis; thiamine diphosphate biosynthesis. Its function is as follows. Catalyzes the synthesis of the hydroxymethylpyrimidine phosphate (HMP-P) moiety of thiamine from aminoimidazole ribotide (AIR) in a radical S-adenosyl-L-methionine (SAM)-dependent reaction. The sequence is that of Phosphomethylpyrimidine synthase from Pseudoalteromonas translucida (strain TAC 125).